We begin with the raw amino-acid sequence, 339 residues long: Glycerol-3-phosphate dehydrogenase [NAD(P)+] (339 aa).

Positions 15, 16, 36, and 110 each coordinate NADPH. Positions 110, 144, and 146 each coordinate sn-glycerol 3-phosphate. An NADPH-binding site is contributed by Ala-148. Sn-glycerol 3-phosphate-binding residues include Lys-199, Asp-252, Ser-262, Arg-263, and Asn-264. Lys-199 (proton acceptor) is an active-site residue. Position 263 (Arg-263) interacts with NADPH. Val-287 and Glu-289 together coordinate NADPH.

It belongs to the NAD-dependent glycerol-3-phosphate dehydrogenase family.

It localises to the cytoplasm. It catalyses the reaction sn-glycerol 3-phosphate + NAD(+) = dihydroxyacetone phosphate + NADH + H(+). It carries out the reaction sn-glycerol 3-phosphate + NADP(+) = dihydroxyacetone phosphate + NADPH + H(+). It functions in the pathway membrane lipid metabolism; glycerophospholipid metabolism. Its function is as follows. Catalyzes the reduction of the glycolytic intermediate dihydroxyacetone phosphate (DHAP) to sn-glycerol 3-phosphate (G3P), the key precursor for phospholipid synthesis. The chain is Glycerol-3-phosphate dehydrogenase [NAD(P)+] from Desulfotalea psychrophila (strain LSv54 / DSM 12343).